A 436-amino-acid chain; its full sequence is Cyclin-dependent kinase 11B (436 aa).

Positions 25–30 (VKKNRK) match the Nuclear localization signal motif. The segment at 30–44 (KKLVKGLHRAGPPPE) is calmodulin-binding. The Protein kinase domain maps to 79–364 (FQCLNRIEEG…AEDGLKHEYF (286 aa)). Residues 85–93 (IEEGTYGVV) and Lys108 each bind ATP. Position 123 is a phosphoserine; by CDK7 (Ser123). Phosphothreonine; by CDK7 is present on Thr129. Asp203 (proton acceptor) is an active-site residue. Ser230 bears the Phosphoserine mark. Phosphotyrosine is present on Tyr235. Thr236 is modified (phosphothreonine). Lys282 is covalently cross-linked (Glycyl lysine isopeptide (Lys-Gly) (interchain with G-Cter in SUMO2)). The interval 383–406 (SEQQCVKRGTSPKPPEGGLGYSQL) is disordered. Thr392 carries the post-translational modification Phosphothreonine. Ser393 bears the Phosphoserine mark.

Belongs to the protein kinase superfamily. CMGC Ser/Thr protein kinase family. CDC2/CDKX subfamily. May interact PAK1 and RANBP9. p110C interacts with RNPS1. Interacts with CCND3. Interacts with CCNL1 and CCNL2. Forms complexes with pre-mRNA-splicing factors, including at least SRSF1, SRSF2 AND SRSF7/SLU7. Mg(2+) is required as a cofactor.

It localises to the cytoplasm. The protein resides in the nucleus membrane. The protein localises to the endomembrane system. Its subcellular location is the perinuclear region. It catalyses the reaction L-seryl-[protein] + ATP = O-phospho-L-seryl-[protein] + ADP + H(+). The enzyme catalyses L-threonyl-[protein] + ATP = O-phospho-L-threonyl-[protein] + ADP + H(+). Its function is as follows. Plays multiple roles in cell cycle progression, cytokinesis and apoptosis. Involved in pre-mRNA splicing in a kinase activity-dependent manner. May act as a negative regulator of normal cell cycle progression. In Rattus norvegicus (Rat), this protein is Cyclin-dependent kinase 11B (Cdk11b).